A 241-amino-acid chain; its full sequence is Triosephosphate isomerase (241 aa).

Asn-9–Lys-11 is a binding site for substrate. His-96 (electrophile) is an active-site residue. Glu-165 (proton acceptor) is an active-site residue. Substrate-binding positions include Gly-171, Ser-204, and Gly-225–Gly-226.

It belongs to the triosephosphate isomerase family. Homodimer.

Its subcellular location is the cytoplasm. It catalyses the reaction D-glyceraldehyde 3-phosphate = dihydroxyacetone phosphate. Its pathway is carbohydrate biosynthesis; gluconeogenesis. The protein operates within carbohydrate degradation; glycolysis; D-glyceraldehyde 3-phosphate from glycerone phosphate: step 1/1. Involved in the gluconeogenesis. Catalyzes stereospecifically the conversion of dihydroxyacetone phosphate (DHAP) to D-glyceraldehyde-3-phosphate (G3P). In Prochlorococcus marinus subsp. pastoris (strain CCMP1986 / NIES-2087 / MED4), this protein is Triosephosphate isomerase.